Consider the following 299-residue polypeptide: ATP phosphoribosyltransferase (299 aa).

Belongs to the ATP phosphoribosyltransferase family. Long subfamily. In terms of assembly, equilibrium between an active dimeric form, an inactive hexameric form and higher aggregates. Interconversion between the various forms is largely reversible and is influenced by the natural substrates and inhibitors of the enzyme. The cofactor is Mg(2+).

It is found in the cytoplasm. The enzyme catalyses 1-(5-phospho-beta-D-ribosyl)-ATP + diphosphate = 5-phospho-alpha-D-ribose 1-diphosphate + ATP. It functions in the pathway amino-acid biosynthesis; L-histidine biosynthesis; L-histidine from 5-phospho-alpha-D-ribose 1-diphosphate: step 1/9. Feedback inhibited by histidine. In terms of biological role, catalyzes the condensation of ATP and 5-phosphoribose 1-diphosphate to form N'-(5'-phosphoribosyl)-ATP (PR-ATP). Has a crucial role in the pathway because the rate of histidine biosynthesis seems to be controlled primarily by regulation of HisG enzymatic activity. The chain is ATP phosphoribosyltransferase from Blochmanniella pennsylvanica (strain BPEN).